We begin with the raw amino-acid sequence, 338 residues long: Lipoate-protein ligase A (338 aa).

Residues 29 to 216 (PATQRVLFLW…AFFEHYSERV (188 aa)) form the BPL/LPL catalytic domain. Residues Arg71, 76 to 79 (GAVF), and Lys134 each bind ATP. Residue Lys134 participates in (R)-lipoate binding.

It belongs to the LplA family. In terms of assembly, monomer.

It localises to the cytoplasm. It carries out the reaction L-lysyl-[lipoyl-carrier protein] + (R)-lipoate + ATP = N(6)-[(R)-lipoyl]-L-lysyl-[lipoyl-carrier protein] + AMP + diphosphate + H(+). Its pathway is protein modification; protein lipoylation via exogenous pathway; protein N(6)-(lipoyl)lysine from lipoate: step 1/2. The protein operates within protein modification; protein lipoylation via exogenous pathway; protein N(6)-(lipoyl)lysine from lipoate: step 2/2. Catalyzes both the ATP-dependent activation of exogenously supplied lipoate to lipoyl-AMP and the transfer of the activated lipoyl onto the lipoyl domains of lipoate-dependent enzymes. This chain is Lipoate-protein ligase A, found in Enterobacter sp. (strain 638).